Reading from the N-terminus, the 452-residue chain is Tubulin alpha-1 chain (452 aa).

A GTP-binding site is contributed by Gln11. Lys40 carries the N6-acetyllysine modification. Residues Glu71, Gly144, Thr145, Thr179, Asn206, and Asn228 each coordinate GTP. Glu71 provides a ligand contact to Mg(2+). Glu254 is an active-site residue. The disordered stretch occupies residues 430 to 452 (KDYEEVGAESGDGDDDGLGEEEY). The span at 431–452 (DYEEVGAESGDGDDDGLGEEEY) shows a compositional bias: acidic residues.

This sequence belongs to the tubulin family. As to quaternary structure, dimer of alpha and beta chains. A typical microtubule is a hollow water-filled tube with an outer diameter of 25 nm and an inner diameter of 15 nM. Alpha-beta heterodimers associate head-to-tail to form protofilaments running lengthwise along the microtubule wall with the beta-tubulin subunit facing the microtubule plus end conferring a structural polarity. Microtubules usually have 13 protofilaments but different protofilament numbers can be found in some organisms and specialized cells. Mg(2+) serves as cofactor. In terms of processing, undergoes a tyrosination/detyrosination cycle, the cyclic removal and re-addition of a C-terminal tyrosine residue by the enzymes tubulin tyrosine carboxypeptidase (TTCP) and tubulin tyrosine ligase (TTL), respectively. Acetylation of alpha chains at Lys-40 stabilizes microtubules and affects affinity and processivity of microtubule motors. This modification has a role in multiple cellular functions, ranging from cell motility, cell cycle progression or cell differentiation to intracellular trafficking and signaling.

The protein localises to the cytoplasm. Its subcellular location is the cytoskeleton. The enzyme catalyses GTP + H2O = GDP + phosphate + H(+). Tubulin is the major constituent of microtubules, a cylinder consisting of laterally associated linear protofilaments composed of alpha- and beta-tubulin heterodimers. Microtubules grow by the addition of GTP-tubulin dimers to the microtubule end, where a stabilizing cap forms. Below the cap, tubulin dimers are in GDP-bound state, owing to GTPase activity of alpha-tubulin. The polypeptide is Tubulin alpha-1 chain (TUBA1) (Pisum sativum (Garden pea)).